The following is a 376-amino-acid chain: Coatomer subunit delta-4 (376 aa).

The tract at residues Leu-65–Gly-92 is disordered. The span at Thr-80 to Gly-92 shows a compositional bias: gly residues. Residues Ser-134 to Val-376 form the MHD domain.

It belongs to the adaptor complexes medium subunit family. Delta-COP subfamily. In terms of assembly, oligomeric complex that consists of at least the alpha, beta, beta', gamma, delta, epsilon and zeta subunits.

It is found in the cytoplasm. The protein resides in the golgi apparatus membrane. Its subcellular location is the cytoplasmic vesicle. The protein localises to the COPI-coated vesicle membrane. The coatomer is a cytosolic protein complex that binds to dilysine motifs and reversibly associates with Golgi non-clathrin-coated vesicles, which further mediate biosynthetic protein transport from the ER, via the Golgi up to the trans Golgi network. Coatomer complex is required for budding from Golgi membranes, and is essential for the retrograde Golgi-to-ER transport of dilysine-tagged proteins. In Oryza sativa subsp. japonica (Rice), this protein is Coatomer subunit delta-4.